The primary structure comprises 269 residues: 3-methyl-2-oxobutanoate hydroxymethyltransferase (269 aa).

Asp50 and Asp89 together coordinate Mg(2+). 3-methyl-2-oxobutanoate-binding positions include 50–51 (DS), Asp89, and Lys118. Residue Glu120 participates in Mg(2+) binding. Residue Glu187 is the Proton acceptor of the active site.

Belongs to the PanB family. In terms of assembly, homodecamer; pentamer of dimers. Mg(2+) serves as cofactor.

It localises to the cytoplasm. It carries out the reaction 3-methyl-2-oxobutanoate + (6R)-5,10-methylene-5,6,7,8-tetrahydrofolate + H2O = 2-dehydropantoate + (6S)-5,6,7,8-tetrahydrofolate. The protein operates within cofactor biosynthesis; (R)-pantothenate biosynthesis; (R)-pantoate from 3-methyl-2-oxobutanoate: step 1/2. Catalyzes the reversible reaction in which hydroxymethyl group from 5,10-methylenetetrahydrofolate is transferred onto alpha-ketoisovalerate to form ketopantoate. This chain is 3-methyl-2-oxobutanoate hydroxymethyltransferase, found in Nitrosomonas eutropha (strain DSM 101675 / C91 / Nm57).